Reading from the N-terminus, the 495-residue chain is UDP-N-acetylmuramoyl-L-alanyl-D-glutamate--2,6-diaminopimelate ligase (495 aa).

2 residues coordinate UDP-N-acetyl-alpha-D-muramoyl-L-alanyl-D-glutamate: leucine 32 and serine 34. 119 to 125 (GTNGKTT) contacts ATP. Residues asparagine 160, 161–162 (TT), serine 188, glutamine 194, and arginine 196 contribute to the UDP-N-acetyl-alpha-D-muramoyl-L-alanyl-D-glutamate site. Lysine 228 is subject to N6-carboxylysine. Meso-2,6-diaminopimelate is bound by residues arginine 390, 414–417 (DNPR), glycine 465, and glutamate 469. Positions 414–417 (DNPR) match the Meso-diaminopimelate recognition motif motif.

Belongs to the MurCDEF family. MurE subfamily. Mg(2+) serves as cofactor. In terms of processing, carboxylation is probably crucial for Mg(2+) binding and, consequently, for the gamma-phosphate positioning of ATP.

Its subcellular location is the cytoplasm. It catalyses the reaction UDP-N-acetyl-alpha-D-muramoyl-L-alanyl-D-glutamate + meso-2,6-diaminopimelate + ATP = UDP-N-acetyl-alpha-D-muramoyl-L-alanyl-gamma-D-glutamyl-meso-2,6-diaminopimelate + ADP + phosphate + H(+). Its pathway is cell wall biogenesis; peptidoglycan biosynthesis. Catalyzes the addition of meso-diaminopimelic acid to the nucleotide precursor UDP-N-acetylmuramoyl-L-alanyl-D-glutamate (UMAG) in the biosynthesis of bacterial cell-wall peptidoglycan. This chain is UDP-N-acetylmuramoyl-L-alanyl-D-glutamate--2,6-diaminopimelate ligase, found in Vibrio cholerae serotype O1 (strain ATCC 39315 / El Tor Inaba N16961).